An 825-amino-acid chain; its full sequence is MDEVSPTKHFTSKPLLPTKTPRDKAISHYVNALNSPRNVVKTETPECGIQIIDGDGNFASTDTRERPSLKNYILSKPEFLKRGMDYNAVGILGAQSSGKSTLLNYLFNTKFRILNEVMGRSRTTHGVWMALSGKESNIVVFDLEGTDGSAREDDYSFERKTSLFSLSVCSVLMVNLWSHDVGRFQASNMSLLKTVFELNLQLFVKEETPKTLIVFVIRDREADTPFDQIERDIMEDIMRIWDTVIPPEEFINSPINRFFDFQFTSLPHYEHFYENFVEEVNLMKKKFDPKNKDTYFLPQYNKEIPADGLSCFCEQIWETIKDNKDLDLPSQREMLSRYRCTEISNQIYKEFNDSIKGEMKILKKGNIIEDFKKVFTKQIDAALERYKEVTERYMETIVEEIEEQLKKQLCGLVESLFERQAELMEKAIGKRVKGEFTIIRNEYALLYNKKEFNPMKYQKYSQELSRTKAVIERDWRKQFDDSVPKFLAEKTKEKFNSVCKDIGIAYEDSVSKMTEVMKQHFGDYLESTIKPKITPYLEACKKDMWKNIRNVINIQFTNGFNKLEEGFKTCSNMNKDTIEEEIKKSKTDILNSIKELVIKRKIELPYLLERKFNNMFRFDNKGLPRKWEPTDDVDTLYFAARDETEDILDMYCYFRIEESDDQYKFTINYRDGDLPSESIETLPKGADEEKVILNHEERKELIETLNGFFEKGYLIALREKENSEIKYQIPLYLIVLVVFFGFDEFIAILTNPLLFILTLIIGGGVYIGYKLNLGGVAKNYIQYLLSMSLSSTMEYLRTIPFFTPLIDKVWPKDDNNTEETQEEIK.

The interval 1-21 is disordered; sequence MDEVSPTKHFTSKPLLPTKTP. Topologically, residues 1–728 are cytoplasmic; that stretch reads MDEVSPTKHF…EKENSEIKYQ (728 aa). Residues 83 to 305 enclose the GB1/RHD3-type G domain; the sequence is GMDYNAVGIL…FLPQYNKEIP (223 aa). 93–100 is a binding site for GTP; the sequence is GAQSSGKS. The stretch at 373–397 forms a coiled coil; sequence KVFTKQIDAALERYKEVTERYMETI. The chain crosses the membrane as a helical span at residues 729–749; it reads IPLYLIVLVVFFGFDEFIAIL. At 750–752 the chain is on the lumenal side; it reads TNP. The helical transmembrane segment at 753 to 773 threads the bilayer; the sequence is LLFILTLIIGGGVYIGYKLNL. The Cytoplasmic segment spans residues 774–825; the sequence is GGVAKNYIQYLLSMSLSSTMEYLRTIPFFTPLIDKVWPKDDNNTEETQEEIK.

The protein belongs to the TRAFAC class dynamin-like GTPase superfamily. GB1/RHD3 GTPase family. RHD3 subfamily.

It localises to the endoplasmic reticulum membrane. In terms of biological role, probable GTP-binding protein that may be involved in cell development. In Entamoeba histolytica (strain ATCC 30459 / HM-1:IMSS / ABRM), this protein is Protein SEY1 homolog 2.